Here is a 508-residue protein sequence, read N- to C-terminus: Photosystem II CP47 reaction center protein (508 aa).

6 consecutive transmembrane segments (helical) span residues Ser-21–Ser-36, Ile-101–Trp-115, Gly-140–Phe-156, Ile-203–Ser-218, Val-237–Val-252, and Thr-457–Arg-472.

The protein belongs to the PsbB/PsbC family. PsbB subfamily. In terms of assembly, PSII is composed of 1 copy each of membrane proteins PsbA, PsbB, PsbC, PsbD, PsbE, PsbF, PsbH, PsbI, PsbJ, PsbK, PsbL, PsbM, PsbT, PsbX, PsbY, PsbZ, Psb30/Ycf12, at least 3 peripheral proteins of the oxygen-evolving complex and a large number of cofactors. It forms dimeric complexes. Binds multiple chlorophylls. PSII binds additional chlorophylls, carotenoids and specific lipids. is required as a cofactor.

It localises to the plastid. Its subcellular location is the chloroplast thylakoid membrane. In terms of biological role, one of the components of the core complex of photosystem II (PSII). It binds chlorophyll and helps catalyze the primary light-induced photochemical processes of PSII. PSII is a light-driven water:plastoquinone oxidoreductase, using light energy to abstract electrons from H(2)O, generating O(2) and a proton gradient subsequently used for ATP formation. In Angiopteris evecta (Mule's foot fern), this protein is Photosystem II CP47 reaction center protein.